The following is a 447-amino-acid chain: Adenylosuccinate synthetase (447 aa).

GTP contacts are provided by residues 12–18 (GDEGKGK) and 40–42 (GHT). Asp-13 (proton acceptor) is an active-site residue. Mg(2+) is bound by residues Asp-13 and Gly-40. IMP-binding positions include 13–16 (DEGK), 38–41 (NAGH), Thr-128, Arg-142, Gln-223, Thr-238, and Arg-302. The Proton donor role is filled by His-41. 298 to 304 (TTTGRRR) is a substrate binding site. GTP-binding positions include Arg-304, 330–332 (KLD), and 412–414 (SLG).

The protein belongs to the adenylosuccinate synthetase family. As to quaternary structure, homodimer. Requires Mg(2+) as cofactor.

The protein resides in the cytoplasm. The enzyme catalyses IMP + L-aspartate + GTP = N(6)-(1,2-dicarboxyethyl)-AMP + GDP + phosphate + 2 H(+). The protein operates within purine metabolism; AMP biosynthesis via de novo pathway; AMP from IMP: step 1/2. Plays an important role in the de novo pathway of purine nucleotide biosynthesis. Catalyzes the first committed step in the biosynthesis of AMP from IMP. The sequence is that of Adenylosuccinate synthetase from Microcystis aeruginosa (strain NIES-843 / IAM M-2473).